Here is a 297-residue protein sequence, read N- to C-terminus: 3-methyl-2-oxobutanoate hydroxymethyltransferase (297 aa).

Polar residues predominate over residues 1–15 (MSEQISEQSEQNVYG). The disordered stretch occupies residues 1 to 40 (MSEQISEQSEQNVYGASSPVPAGESSPSAASAPRTKVRTH). Residues 16–33 (ASSPVPAGESSPSAASAP) show a composition bias toward low complexity. Residues Asp78 and Asp117 each coordinate Mg(2+). 3-methyl-2-oxobutanoate contacts are provided by residues 78–79 (DS), Asp117, and Lys147. Glu149 is a binding site for Mg(2+). Residue Glu215 is the Proton acceptor of the active site.

Belongs to the PanB family. As to quaternary structure, homodecamer; pentamer of dimers. Requires Mg(2+) as cofactor.

The protein resides in the cytoplasm. It catalyses the reaction 3-methyl-2-oxobutanoate + (6R)-5,10-methylene-5,6,7,8-tetrahydrofolate + H2O = 2-dehydropantoate + (6S)-5,6,7,8-tetrahydrofolate. It functions in the pathway cofactor biosynthesis; (R)-pantothenate biosynthesis; (R)-pantoate from 3-methyl-2-oxobutanoate: step 1/2. Functionally, catalyzes the reversible reaction in which hydroxymethyl group from 5,10-methylenetetrahydrofolate is transferred onto alpha-ketoisovalerate to form ketopantoate. The sequence is that of 3-methyl-2-oxobutanoate hydroxymethyltransferase from Mycobacterium marinum (strain ATCC BAA-535 / M).